The following is a 344-amino-acid chain: Adenosine kinase (344 aa).

Asp298 is a catalytic residue.

It belongs to the carbohydrate kinase PfkB family. The cofactor is Mg(2+).

It catalyses the reaction adenosine + ATP = AMP + ADP + H(+). The protein operates within purine metabolism; AMP biosynthesis via salvage pathway; AMP from adenosine: step 1/1. The protein is Adenosine kinase (ADK) of Schizophyllum commune (Split gill fungus).